The chain runs to 302 residues: N-acetylmuramic acid 6-phosphate etherase (302 aa).

The SIS domain maps to 58 to 221; the sequence is IGESFLNGGR…STGAMVKTGK (164 aa). Residue Glu-86 is the Proton donor of the active site. Glu-117 is an active-site residue.

It belongs to the GCKR-like family. MurNAc-6-P etherase subfamily. As to quaternary structure, homodimer.

The catalysed reaction is N-acetyl-D-muramate 6-phosphate + H2O = N-acetyl-D-glucosamine 6-phosphate + (R)-lactate. It functions in the pathway amino-sugar metabolism; N-acetylmuramate degradation. Specifically catalyzes the cleavage of the D-lactyl ether substituent of MurNAc 6-phosphate, producing GlcNAc 6-phosphate and D-lactate. This Clostridium botulinum (strain Langeland / NCTC 10281 / Type F) protein is N-acetylmuramic acid 6-phosphate etherase.